Reading from the N-terminus, the 410-residue chain is Peptidase T (410 aa).

His-79 contacts Zn(2+). Asp-81 is an active-site residue. Asp-142 provides a ligand contact to Zn(2+). Glu-176 functions as the Proton acceptor in the catalytic mechanism. The Zn(2+) site is built by Glu-177, Asp-199, and His-381.

Belongs to the peptidase M20B family. Requires Zn(2+) as cofactor.

The protein localises to the cytoplasm. It carries out the reaction Release of the N-terminal residue from a tripeptide.. Functionally, cleaves the N-terminal amino acid of tripeptides. The polypeptide is Peptidase T (Listeria monocytogenes serotype 4b (strain CLIP80459)).